The primary structure comprises 548 residues: Chaperonin GroEL (548 aa).

Residues 30-33 (TLGP), Lys-51, 87-91 (DGTTT), Gly-415, 479-481 (NAA), and Asp-495 contribute to the ATP site.

It belongs to the chaperonin (HSP60) family. As to quaternary structure, forms a cylinder of 14 subunits composed of two heptameric rings stacked back-to-back. Interacts with the co-chaperonin GroES.

It is found in the cytoplasm. The catalysed reaction is ATP + H2O + a folded polypeptide = ADP + phosphate + an unfolded polypeptide.. Together with its co-chaperonin GroES, plays an essential role in assisting protein folding. The GroEL-GroES system forms a nano-cage that allows encapsulation of the non-native substrate proteins and provides a physical environment optimized to promote and accelerate protein folding. The protein is Chaperonin GroEL of Lawsonia intracellularis (strain PHE/MN1-00).